We begin with the raw amino-acid sequence, 571 residues long: Medium/long-chain-fatty-acid--CoA ligase FadD8 (571 aa).

The disordered stretch occupies residues 1–22; the sequence is MSTAGDDAVGVPPACGGRSDAV.

Belongs to the ATP-dependent AMP-binding enzyme family.

The catalysed reaction is a medium-chain fatty acid + ATP + CoA = a medium-chain fatty acyl-CoA + AMP + diphosphate. The enzyme catalyses a long-chain fatty acid + ATP + CoA = a long-chain fatty acyl-CoA + AMP + diphosphate. It carries out the reaction hexanoate + ATP + CoA = hexanoyl-CoA + AMP + diphosphate. It catalyses the reaction dodecanoate + ATP + CoA = dodecanoyl-CoA + AMP + diphosphate. The catalysed reaction is hexadecanoate + ATP + CoA = hexadecanoyl-CoA + AMP + diphosphate. It functions in the pathway lipid metabolism; fatty acid metabolism. Its function is as follows. Catalyzes the activation of medium/long-chain fatty acids as acyl-coenzyme A (acyl-CoA). In Mycobacterium tuberculosis (strain ATCC 25618 / H37Rv), this protein is Medium/long-chain-fatty-acid--CoA ligase FadD8.